The primary structure comprises 132 residues: Agouti-signaling protein (132 aa).

The signal sequence occupies residues 1-22; sequence MDVTRLLLATLLVFLCFFTANS. An N-linked (GlcNAc...) asparagine glycan is attached at N39. The disordered stretch occupies residues 61–87; the sequence is QIGRKEAEKKRSSKKEASMKKVARPRT. The span at 63–79 shows a compositional bias: basic and acidic residues; that stretch reads GRKEAEKKRSSKKEASM. 5 disulfides stabilise this stretch: C93/C108, C100/C114, C107/C125, C111/C132, and C116/C123. The region spanning 93–132 is the Agouti domain; the sequence is CVATRNSCKPPAPACCDPCASCQCRFFRSACSCRVLSLNC.

It is found in the secreted. Its function is as follows. Involved in the regulation of melanogenesis. The binding of ASP to MC1R precludes alpha-MSH initiated signaling and thus blocks production of cAMP, leading to a down-regulation of eumelanogenesis (brown/black pigment) and thus increasing synthesis of pheomelanin (yellow/red pigment). This chain is Agouti-signaling protein (ASIP), found in Gorilla gorilla gorilla (Western lowland gorilla).